Reading from the N-terminus, the 201-residue chain is MSYLGVGVSPGNVTGSSTKMKLIDRKVRVTELILRSLVCAFALVAAILVATDVQVREIFTIQKKAKFTDMKALVFLVVINGIAAGYSLVQAVCCLVGLMKGSVLLSEPLAWAIFFGDQAVAYLCVAGVAAAAQSAAFAKLGQPELQWMKICDMYGKFCNQVGEGIASALFACIGMVLISCISAFGVFRLYGGSKPRQSSRW.

Topologically, residues 1–28 (MSYLGVGVSPGNVTGSSTKMKLIDRKVR) are cytoplasmic. A helical transmembrane segment spans residues 29–49 (VTELILRSLVCAFALVAAILV). Residues 50 to 71 (ATDVQVREIFTIQKKAKFTDMK) lie on the Extracellular side of the membrane. Residues 72–92 (ALVFLVVINGIAAGYSLVQAV) form a helical membrane-spanning segment. Over 93-108 (CCLVGLMKGSVLLSEP) the chain is Cytoplasmic. A helical transmembrane segment spans residues 109 to 129 (LAWAIFFGDQAVAYLCVAGVA). At 130–166 (AAAQSAAFAKLGQPELQWMKICDMYGKFCNQVGEGIA) the chain is on the extracellular side. The helical transmembrane segment at 167-187 (SALFACIGMVLISCISAFGVF) threads the bilayer. Residues 188–201 (RLYGGSKPRQSSRW) are Cytoplasmic-facing.

This sequence belongs to the Casparian strip membrane proteins (CASP) family. Homodimer and heterodimers.

The protein resides in the cell membrane. This Arabidopsis lyrata subsp. lyrata (Lyre-leaved rock-cress) protein is CASP-like protein 2B2.